The primary structure comprises 335 residues: Antigen-presenting glycoprotein CD1d (335 aa).

Residues 1-17 form the signal peptide; it reads MGCLLFLVLLEFQKIWG. Over 18–304 the chain is Extracellular; sequence SFEAPQTSFP…WDGKRVSRGL (287 aa). 2 N-linked (GlcNAc...) asparagine glycosylation sites follow: N38 and N60. An a D-galactosylceramide-binding site is contributed by D98. Cystine bridges form between C120–C184 and C224–C279. Residue N126 is glycosylated (N-linked (GlcNAc...) asparagine). Residues D169, 169 to 172, and T172 contribute to the a D-galactosylceramide site; that span reads DQGT. The 111-residue stretch at 185–295 folds into the Ig-like domain; it reads PELVKGLMQT…LGDQDIILYW (111 aa). A helical membrane pass occupies residues 305–325; the sequence is IVVLVILVFVLLFVGGLVFWF. The Cytoplasmic portion of the chain corresponds to 326 to 335; the sequence is RKHRRYQDIS. The Internalization signal motif lies at 331–334; the sequence is YQDI.

Heterodimer with B2M (beta-2-microglobulin). Interacts with MHC II and CD74. As to expression, expressed on cortical thymocytes, on certain T-cell leukemias, and in various other tissues.

Its subcellular location is the cell membrane. It localises to the basolateral cell membrane. The protein localises to the endosome membrane. The protein resides in the lysosome membrane. It is found in the endoplasmic reticulum membrane. In terms of biological role, antigen-presenting protein that binds self and non-self glycolipids and presents them to T-cell receptors on natural killer T-cells. This Ovis aries (Sheep) protein is Antigen-presenting glycoprotein CD1d (CD1D).